The following is a 197-amino-acid chain: Recombination protein RecR (197 aa).

Residues 57-72 (CSVCFGITEEDPCRLC) form a C4-type zinc finger. The Toprim domain maps to 79–174 (TSLCVVEEPQ…RVTRLAHGIP (96 aa)).

The protein belongs to the RecR family.

In terms of biological role, may play a role in DNA repair. It seems to be involved in an RecBC-independent recombinational process of DNA repair. It may act with RecF and RecO. In Geobacter metallireducens (strain ATCC 53774 / DSM 7210 / GS-15), this protein is Recombination protein RecR.